The primary structure comprises 232 residues: 2,3,4,5-tetrahydropyridine-2,6-dicarboxylate N-acetyltransferase (232 aa).

This sequence belongs to the transferase hexapeptide repeat family. DapH subfamily.

It carries out the reaction (S)-2,3,4,5-tetrahydrodipicolinate + acetyl-CoA + H2O = L-2-acetamido-6-oxoheptanedioate + CoA. The protein operates within amino-acid biosynthesis; L-lysine biosynthesis via DAP pathway; LL-2,6-diaminopimelate from (S)-tetrahydrodipicolinate (acetylase route): step 1/3. In terms of biological role, catalyzes the transfer of an acetyl group from acetyl-CoA to tetrahydrodipicolinate. The chain is 2,3,4,5-tetrahydropyridine-2,6-dicarboxylate N-acetyltransferase from Streptococcus pneumoniae serotype 2 (strain D39 / NCTC 7466).